Reading from the N-terminus, the 248-residue chain is Putative TrmH family tRNA/rRNA methyltransferase (248 aa).

Gly-196, Ile-216, and Leu-225 together coordinate S-adenosyl-L-methionine.

It belongs to the class IV-like SAM-binding methyltransferase superfamily. RNA methyltransferase TrmH family.

The sequence is that of Putative TrmH family tRNA/rRNA methyltransferase from Staphylococcus aureus (strain Mu50 / ATCC 700699).